We begin with the raw amino-acid sequence, 366 residues long: Terpene synthase 4 (366 aa).

The short motif at 91–96 (DDFLER) is the DDxx(x)D/E motif element. The short motif at 241–249 (NDCVSYAKE) is the NDxxSxxxD/E motif element.

Belongs to the terpene synthase family.

The catalysed reaction is (2E,6E)-farnesyl diphosphate = (1S,2S,4R)-beta-elemene + diphosphate. In terms of biological role, terpene synthase that converts its substrate farnesyl diphosphate (FPP) into the sesquiterpenes bicycloelemene, beta-elemene and 2 yet unidentified sesquiterpenes. In Dictyostelium purpureum (Slime mold), this protein is Terpene synthase 4.